The primary structure comprises 403 residues: MACPYLGSGELTHRVTFMEGGEECQQGVNKVEMGFGQTYSEYLQLDKILTAQRLKSEADGQRVDDEHLFIVIHQAHELWFKQIIFDLDNVRKLLNNTIVDETKTLKIVSGLDRMTKILSLLTEQITLLDTMSPLDFVDFRKYLTPASGFQSLQFRVLENKLGVRQERRIKYNAQHYKNVFNDTDLKTLNVTEEEKSLLTLIESWLERTPGLKSTSEDEGFWIKYEKSVNKYLADLAKQAADPSNTEEIAKQLTAEYHKTADAFQSILDPRQHEQHIRNGNRLLSHDATKGAMMIYFYRDMPRFSQPYQILTFLMDIDSLFTKWRYNHVLLVQRMLGAKQGTGGSSGYMYLRSTVSDRYKVFLDLFNLSTWLIPREYIPMLSPRMVKTLSEHSNLSHSQSSESD.

69-73 (FIVIH) is a substrate binding site. A PLD motif; required for enzymatic activity motif is present at residues 133–135 (PLD). Arg140 serves as a coordination point for substrate. His327 lines the heme pocket. Thr341 contributes to the substrate binding site.

It belongs to the tryptophan 2,3-dioxygenase family. In terms of assembly, homotetramer. Dimer of dimers. The cofactor is heme. In terms of tissue distribution, expressed in body wall muscle cells, hypodermis, PLM neurons and touch-receptor neurons.

It carries out the reaction L-tryptophan + O2 = N-formyl-L-kynurenine. The protein operates within amino-acid degradation; L-tryptophan degradation via kynurenine pathway; L-kynurenine from L-tryptophan: step 1/2. Heme-dependent dioxygenase that catalyzes the oxidative cleavage of the L-tryptophan (L-Trp) pyrrole ring and converts L-tryptophan to N-formyl-L-kynurenine. Catalyzes the oxidative cleavage of the indole moiety. Involved in regulation of protein homeostasis, longevity and reproducive life span. Specifically regulates proteotoxicity due to age-related aggregation of proteins like alpha-synuclein, via its effects on tryptophan metabolism. The protein is Tryptophan 2,3-dioxygenase of Caenorhabditis elegans.